Here is a 240-residue protein sequence, read N- to C-terminus: 2,3,4,5-tetrahydropyridine-2,6-dicarboxylate N-acetyltransferase (240 aa).

This sequence belongs to the transferase hexapeptide repeat family. DapH subfamily.

The catalysed reaction is (S)-2,3,4,5-tetrahydrodipicolinate + acetyl-CoA + H2O = L-2-acetamido-6-oxoheptanedioate + CoA. The protein operates within amino-acid biosynthesis; L-lysine biosynthesis via DAP pathway; LL-2,6-diaminopimelate from (S)-tetrahydrodipicolinate (acetylase route): step 1/3. Functionally, catalyzes the transfer of an acetyl group from acetyl-CoA to tetrahydrodipicolinate. This chain is 2,3,4,5-tetrahydropyridine-2,6-dicarboxylate N-acetyltransferase, found in Staphylococcus epidermidis (strain ATCC 35984 / DSM 28319 / BCRC 17069 / CCUG 31568 / BM 3577 / RP62A).